Here is a 170-residue protein sequence, read N- to C-terminus: uncharacterized protein (170 aa).

The Cytoplasmic portion of the chain corresponds to 1 to 15 (MFLTSPFESCIVLSS). A helical transmembrane segment spans residues 16-36 (LIAGLLFSLSTGFVGILGVFA). Over 37-76 (SLFETELSVSPKRLSLSSLSWPKTFWALLSSVEGVSWESS) the chain is Extracellular. A helical transmembrane segment spans residues 77-97 (LFACIVGCCFAVTVIASLSAS). Residues 98 to 119 (RVFGTVASSFRDSSCCCDSSPA) are Cytoplasmic-facing. The helical transmembrane segment at 120-140 (VSVLATPATAALALLSLLLSL) threads the bilayer. Residues 141–170 (PCWSTSTEAFTVDPSPSVFSMLANRITIGL) lie on the Extracellular side of the membrane.

Its subcellular location is the membrane. This is an uncharacterized protein from Saccharomyces cerevisiae (strain ATCC 204508 / S288c) (Baker's yeast).